The sequence spans 302 residues: Acetyl-coenzyme A carboxylase carboxyl transferase subunit beta (302 aa).

A CoA carboxyltransferase N-terminal domain is found at Val25 to Ala294. Residues Cys29, Cys32, Cys48, and Cys51 each coordinate Zn(2+). The C4-type zinc finger occupies Cys29–Cys51.

This sequence belongs to the AccD/PCCB family. Acetyl-CoA carboxylase is a heterohexamer composed of biotin carboxyl carrier protein (AccB), biotin carboxylase (AccC) and two subunits each of ACCase subunit alpha (AccA) and ACCase subunit beta (AccD). Zn(2+) serves as cofactor.

The protein localises to the cytoplasm. It carries out the reaction N(6)-carboxybiotinyl-L-lysyl-[protein] + acetyl-CoA = N(6)-biotinyl-L-lysyl-[protein] + malonyl-CoA. The protein operates within lipid metabolism; malonyl-CoA biosynthesis; malonyl-CoA from acetyl-CoA: step 1/1. Its function is as follows. Component of the acetyl coenzyme A carboxylase (ACC) complex. Biotin carboxylase (BC) catalyzes the carboxylation of biotin on its carrier protein (BCCP) and then the CO(2) group is transferred by the transcarboxylase to acetyl-CoA to form malonyl-CoA. This is Acetyl-coenzyme A carboxylase carboxyl transferase subunit beta from Erwinia tasmaniensis (strain DSM 17950 / CFBP 7177 / CIP 109463 / NCPPB 4357 / Et1/99).